Reading from the N-terminus, the 247-residue chain is Cobalt transport protein CbiM (247 aa).

The N-terminal stretch at 1-21 (MVGWGVLILLMVLWLPRQAYA) is a signal peptide. Transmembrane regions (helical) follow at residues 27–47 (GYLPLGWCLFWAALCLPALIL), 64–84 (LVLALSAAFAFVLSALKLPSV), 96–116 (LGAVLFGPMAMSVVGCIILLF), 119–139 (LLLAHGGITTLGANTFSMAVV), 159–179 (GVAVFLAAALGDLSTYLTTSL), 181–201 (LALAFPAPIGGVASSFWKFAS), and 202–222 (IFAVTQVPLAVSEGLLTVIMV).

Belongs to the CbiM family. Forms an energy-coupling factor (ECF) transporter complex composed of an ATP-binding protein (A component, CbiO), a transmembrane protein (T component, CbiQ) and 2 possible substrate-capture proteins (S components, CbiM and CbiN) of unknown stoichimetry.

It localises to the cell membrane. Its pathway is cofactor biosynthesis; adenosylcobalamin biosynthesis. In terms of biological role, part of the energy-coupling factor (ECF) transporter complex CbiMNOQ involved in cobalt import. This is Cobalt transport protein CbiM from Kyrpidia tusciae (strain DSM 2912 / NBRC 15312 / T2) (Bacillus tusciae).